Consider the following 275-residue polypeptide: Large ribosomal subunit protein uL2 (275 aa).

Residues Val220–Arg275 form a disordered region. The segment covering Pro227 to Ala239 has biased composition (basic and acidic residues). Residues Lys249–Asn262 show a composition bias toward basic residues.

Belongs to the universal ribosomal protein uL2 family. As to quaternary structure, part of the 50S ribosomal subunit. Forms a bridge to the 30S subunit in the 70S ribosome.

Functionally, one of the primary rRNA binding proteins. Required for association of the 30S and 50S subunits to form the 70S ribosome, for tRNA binding and peptide bond formation. It has been suggested to have peptidyltransferase activity; this is somewhat controversial. Makes several contacts with the 16S rRNA in the 70S ribosome. The polypeptide is Large ribosomal subunit protein uL2 (Roseiflexus sp. (strain RS-1)).